A 257-amino-acid polypeptide reads, in one-letter code: Origin recognition complex subunit 6 (257 aa).

The segment at 186–222 (HKESKVPSSTDMEGKLKENQNENIKGHEAKKAHKPPP) is disordered. Positions 197–222 (MEGKLKENQNENIKGHEAKKAHKPPP) are enriched in basic and acidic residues.

It belongs to the ORC6 family. In terms of assembly, ORC is composed of six subunits.

The protein localises to the nucleus. Functionally, component of the origin recognition complex (ORC) that binds origins of replication. DNA-binding is ATP-dependent, however specific DNA sequences that define origins of replication have not been identified so far. ORC is required to assemble the pre-replication complex necessary to initiate DNA replication. The protein is Origin recognition complex subunit 6 (Orc6) of Drosophila melanogaster (Fruit fly).